A 98-amino-acid polypeptide reads, in one-letter code: Integration host factor subunit alpha (98 aa).

A disordered region spans residues 54 to 74; that stretch reads LRDKSSRPGRNPKTGESVPVS.

This sequence belongs to the bacterial histone-like protein family. As to quaternary structure, heterodimer of an alpha and a beta chain.

Functionally, this protein is one of the two subunits of integration host factor, a specific DNA-binding protein that functions in genetic recombination as well as in transcriptional and translational control. The polypeptide is Integration host factor subunit alpha (ihfA) (Pasteurella multocida (strain Pm70)).